The following is a 370-amino-acid chain: Quinolinate synthase (370 aa).

Iminosuccinate contacts are provided by H62 and S83. C128 is a [4Fe-4S] cluster binding site. Residues 154–156 (YAN) and S171 each bind iminosuccinate. Position 215 (C215) interacts with [4Fe-4S] cluster. Iminosuccinate contacts are provided by residues 241–243 (HPE) and T258. C312 contacts [4Fe-4S] cluster.

This sequence belongs to the quinolinate synthase family. Type 1 subfamily. [4Fe-4S] cluster serves as cofactor.

It is found in the cytoplasm. It carries out the reaction iminosuccinate + dihydroxyacetone phosphate = quinolinate + phosphate + 2 H2O + H(+). The protein operates within cofactor biosynthesis; NAD(+) biosynthesis; quinolinate from iminoaspartate: step 1/1. Catalyzes the condensation of iminoaspartate with dihydroxyacetone phosphate to form quinolinate. The polypeptide is Quinolinate synthase (Neisseria meningitidis serogroup C / serotype 2a (strain ATCC 700532 / DSM 15464 / FAM18)).